A 300-amino-acid polypeptide reads, in one-letter code: Acetyl-coenzyme A carboxylase carboxyl transferase subunit beta 1 (300 aa).

Positions Met-26–Ala-294 constitute a CoA carboxyltransferase N-terminal domain. 4 residues coordinate Zn(2+): Cys-30, Cys-33, Cys-49, and Cys-51. A C4-type zinc finger spans residues Cys-30–Cys-51.

Belongs to the AccD/PCCB family. In terms of assembly, acetyl-CoA carboxylase is a heterohexamer composed of biotin carboxyl carrier protein (AccB), biotin carboxylase (AccC) and two subunits each of ACCase subunit alpha (AccA) and ACCase subunit beta (AccD). It depends on Zn(2+) as a cofactor.

The protein localises to the cytoplasm. It carries out the reaction N(6)-carboxybiotinyl-L-lysyl-[protein] + acetyl-CoA = N(6)-biotinyl-L-lysyl-[protein] + malonyl-CoA. It functions in the pathway lipid metabolism; malonyl-CoA biosynthesis; malonyl-CoA from acetyl-CoA: step 1/1. Functionally, component of the acetyl coenzyme A carboxylase (ACC) complex. Biotin carboxylase (BC) catalyzes the carboxylation of biotin on its carrier protein (BCCP) and then the CO(2) group is transferred by the transcarboxylase to acetyl-CoA to form malonyl-CoA. This chain is Acetyl-coenzyme A carboxylase carboxyl transferase subunit beta 1, found in Roseiflexus sp. (strain RS-1).